The chain runs to 470 residues: Putative multidrug resistance protein MdtD (470 aa).

Residues 1–11 (MTELPDNTRWQ) lie on the Periplasmic side of the membrane. A helical membrane pass occupies residues 12 to 32 (LWIVALGFFMQSLDTTIVNTA). The Cytoplasmic segment spans residues 33–48 (LPSMAKSLGESPLHMH). Residues 49-69 (MVVVSYVLTVAVMLPASGWLA) traverse the membrane as a helical segment. Residues 70 to 76 (DKIGVRN) are Periplasmic-facing. The helical transmembrane segment at 77–97 (IFFAAIVLFTLGSLFCALSGT) threads the bilayer. The Cytoplasmic segment spans residues 98-101 (LNQL). A helical membrane pass occupies residues 102 to 124 (VLARVLQGVGGAMMVPVGRLTVM). Over 125-137 (KIVPRAQYMAAMT) the chain is Periplasmic. A helical membrane pass occupies residues 138-158 (FVTLPGQIGPLLGPALGGVLV). The Cytoplasmic segment spans residues 159–164 (EYASWH). The chain crosses the membrane as a helical span at residues 165-185 (WIFLINIPVGIVGAMATFMLM). Residues 186-196 (PNYTIETRRFD) are Periplasmic-facing. The chain crosses the membrane as a helical span at residues 197–217 (LPGFLLLAIGMAVLTLALDGS). Residues 218–221 (KSMG) lie on the Cytoplasmic side of the membrane. Residues 222–242 (ISPWTLAGLAAGGAAAILLYL) form a helical membrane-spanning segment. Residues 243 to 262 (LHAKKNSGALFSLRLFCTPT) lie on the Periplasmic side of the membrane. The chain crosses the membrane as a helical span at residues 263–283 (FSLGLLGSFAGRIGSGMLPFM). Residues 284–285 (TP) lie on the Cytoplasmic side of the membrane. A helical transmembrane segment spans residues 286 to 306 (VFLQIGLGFSPFHAGLMMIPM). The Periplasmic portion of the chain corresponds to 307 to 341 (VLGSMGMKRIVVQIVNRFGYRRVLVATTLGLALVS). The chain crosses the membrane as a helical span at residues 342 to 362 (LLFMSVALLGWYYLLPLVLLL). The Cytoplasmic portion of the chain corresponds to 363 to 395 (QGMVNSARFSSMNTLTLKDLPDTLASSGNSLLS). Residues 396 to 416 (MIMQLSMSIGVTIAGMLLGMF) form a helical membrane-spanning segment. Topologically, residues 417-430 (GQQHIGIDSSATHH) are periplasmic. The helical transmembrane segment at 431-451 (VFMYTWLCMAVIIALPAIIFA) threads the bilayer. Topologically, residues 452–470 (RVPNDTQQNMVISRRKRSL) are cytoplasmic.

Belongs to the major facilitator superfamily. TCR/Tet family.

Its subcellular location is the cell inner membrane. This chain is Putative multidrug resistance protein MdtD, found in Salmonella paratyphi B (strain ATCC BAA-1250 / SPB7).